The sequence spans 512 residues: Vacuolar protein sorting-associated protein 30 (512 aa).

Residues 294-511 (TNIYNESFRI…LVFCSSKLSL (218 aa)) form a BARA region.

Belongs to the beclin family. In terms of assembly, component of the autophagy-specific VPS34 PI3-kinase complex I composed of VPS15, VPS30, VPS34, ATG14 and ATG38; and of the VPS34 PI3-kinase complex II composed of VPS15, VPS30, VPS34 and VPS38.

It localises to the endosome membrane. It is found in the vacuole membrane. The protein localises to the preautophagosomal structure membrane. In terms of biological role, required for cytoplasm to vacuole transport (Cvt), autophagy, nucleophagy, and mitophagy, as a part of the autophagy-specific VPS34 PI3-kinase complex I. This complex is essential to recruit the ATG8-phosphatidylinositol conjugate and the ATG12-ATG5 conjugate to the pre-autophagosomal structure. Also involved in endosome-to-Golgi retrograde transport as part of the VPS34 PI3-kinase complex II. This second complex is required for the endosome-to-Golgi retrieval of PEP1 and KEX2, and the recruitment of VPS5 and VPS7, two components of the retromer complex, to endosomal membranes (probably through the synthesis of a specific pool of phosphatidylinositol 3-phosphate recruiting the retromer to the endosomes). Required for survival and/or proliferation in kidneys but not brain. The chain is Vacuolar protein sorting-associated protein 30 from Candida glabrata (strain ATCC 2001 / BCRC 20586 / JCM 3761 / NBRC 0622 / NRRL Y-65 / CBS 138) (Yeast).